A 293-amino-acid chain; its full sequence is Protein nud-2 (293 aa).

Residues 36 to 147 (EIEKMMDSEL…EKIAMLESEL (112 aa)) are a coiled coil. Residues 239–293 (KSQRVSTGTGAGACINRIVKDLMTKVERLDSILSTIRVSNNSSNNNSSHLTTTRA) are required for interaction with unc-83 isoform c.

Belongs to the nudE family. As to quaternary structure, component of a dynein-regulating complex composed of at least lis-1 and nud-2. Interacts with lis-1; the interaction is direct. Interacts (via C-terminus) with unc-83; the interaction is direct, and is required for recruitment of nud-2 to the nuclear envelope. Expressed in ventral cord neurons, the pharynx, seam cells of the hypodermis and in vulval muscle cells.

It is found in the nucleus envelope. Functionally, part of a complex with lis-1, which is recruited to the nuclear envelope by unc-83, where, in turn, it recruits dynein to the nuclear surface and regulates nuclear migration in hypodermal precursor cells. Plays a role in GABAergic synaptic vesicle localization in the ventral nerve cord. This is Protein nud-2 from Caenorhabditis elegans.